The primary structure comprises 370 residues: 1-propanol dehydrogenase PduQ (370 aa).

This sequence belongs to the iron-containing alcohol dehydrogenase family. Interacts with PduP, probably via the N-terminus of PduQ. Requires Fe cation as cofactor.

The protein resides in the bacterial microcompartment. The catalysed reaction is 1-propanol + NAD(+) = propanal + NADH + H(+). It participates in polyol metabolism; 1,2-propanediol degradation. Its activity is regulated as follows. Enzyme is oxygen sensitive. Functionally, an iron-dependent alcohol dehydrogenase required for optimal 1,2-propanediol (1,2-PD) degradation. NAD(+) and NADH are regenerated internally within the bacterial microcompartment (BMC) dedicated to 1,2-PD degradation by the PduP and PduQ enzymes, which reduce NAD(+) and oxidize NADH respectively, although there must also be cofactor transport across the BMC. Its function is as follows. The 1,2-PD-specific bacterial microcompartment (BMC) concentrates low levels of 1,2-PD catabolic enzymes, concentrates volatile reaction intermediates thus enhancing pathway flux and keeps the level of toxic, mutagenic propionaldehyde low. The polypeptide is 1-propanol dehydrogenase PduQ (Salmonella typhimurium (strain LT2 / SGSC1412 / ATCC 700720)).